Consider the following 185-residue polypeptide: Guanylate kinase (185 aa).

The Guanylate kinase-like domain maps to 3-181; it reads TRMIIVAAPS…SYGEFKKIVE (179 aa). Residue 10 to 17 coordinates ATP; sequence APSGAGKS.

The protein belongs to the guanylate kinase family.

It localises to the cytoplasm. It catalyses the reaction GMP + ATP = GDP + ADP. Functionally, essential for recycling GMP and indirectly, cGMP. This chain is Guanylate kinase, found in Bdellovibrio bacteriovorus (strain ATCC 15356 / DSM 50701 / NCIMB 9529 / HD100).